The chain runs to 387 residues: Succinyl-diaminopimelate desuccinylase (387 aa).

Residue His73 coordinates Zn(2+). Residue Asp75 is part of the active site. Asp106 is a Zn(2+) binding site. Glu141 acts as the Proton acceptor in catalysis. Residues Glu142, Glu170, and His359 each coordinate Zn(2+).

The protein belongs to the peptidase M20A family. DapE subfamily. As to quaternary structure, homodimer. Requires Zn(2+) as cofactor. Co(2+) serves as cofactor.

It catalyses the reaction N-succinyl-(2S,6S)-2,6-diaminopimelate + H2O = (2S,6S)-2,6-diaminopimelate + succinate. It participates in amino-acid biosynthesis; L-lysine biosynthesis via DAP pathway; LL-2,6-diaminopimelate from (S)-tetrahydrodipicolinate (succinylase route): step 3/3. In terms of biological role, catalyzes the hydrolysis of N-succinyl-L,L-diaminopimelic acid (SDAP), forming succinate and LL-2,6-diaminopimelate (DAP), an intermediate involved in the bacterial biosynthesis of lysine and meso-diaminopimelic acid, an essential component of bacterial cell walls. The protein is Succinyl-diaminopimelate desuccinylase of Methylorubrum populi (strain ATCC BAA-705 / NCIMB 13946 / BJ001) (Methylobacterium populi).